The chain runs to 264 residues: Enhancer of mRNA-decapping protein 1 (264 aa).

Disordered regions lie at residues 1–180 and 193–264; these read MLAQ…FSTI and YNNP…LRDY. Basic residues predominate over residues 63 to 74; that stretch reads GKKSTSKPKSKS. Residues 83 to 92 are compositionally biased toward polar residues; it reads NFKLTASPSL. Over residues 108-118 the composition is skewed to pro residues; that stretch reads PSPPPPPPPST. 3 stretches are compositionally biased toward low complexity: residues 119–134, 161–172, and 208–226; these read QPST…RTST, NGKKPNFFNNNN, and NNNN…NSNS. The span at 248 to 264 shows a compositional bias: polar residues; sequence FKSNNGSPRQSSGLRDY.

Belongs to the EDC family.

It is found in the cytoplasm. Functionally, mRNA-binding protein which stimulates mRNA decapping. The chain is Enhancer of mRNA-decapping protein 1 (EDC1) from Candida albicans (strain SC5314 / ATCC MYA-2876) (Yeast).